A 577-amino-acid chain; its full sequence is Aspartate--tRNA(Asp/Asn) ligase (577 aa).

Residue glutamate 171 coordinates L-aspartate. The tract at residues 195–198 is aspartate; sequence QLFK. L-aspartate is bound at residue arginine 217. ATP contacts are provided by residues 217–219 and glutamine 226; that span reads RDE. Position 444 (histidine 444) interacts with L-aspartate. Glutamate 474 contributes to the ATP binding site. Arginine 481 serves as a coordination point for L-aspartate. 526–529 provides a ligand contact to ATP; it reads GFDR.

Belongs to the class-II aminoacyl-tRNA synthetase family. Type 1 subfamily. As to quaternary structure, homodimer.

The protein localises to the cytoplasm. It carries out the reaction tRNA(Asx) + L-aspartate + ATP = L-aspartyl-tRNA(Asx) + AMP + diphosphate. Functionally, aspartyl-tRNA synthetase with relaxed tRNA specificity since it is able to aspartylate not only its cognate tRNA(Asp) but also tRNA(Asn). Reaction proceeds in two steps: L-aspartate is first activated by ATP to form Asp-AMP and then transferred to the acceptor end of tRNA(Asp/Asn). The protein is Aspartate--tRNA(Asp/Asn) ligase of Helicobacter pylori (strain P12).